We begin with the raw amino-acid sequence, 173 residues long: T-cell surface glycoprotein CD3 delta chain (173 aa).

An N-terminal signal peptide occupies residues 1–21; the sequence is MEHSGILASLILIAVLPQGSP. Over 22 to 105 the chain is Extracellular; that stretch reads FKIQVTEYED…CVELDSGTMA (84 aa). A disulfide bond links Cys-37 and Cys-73. 3 N-linked (GlcNAc...) asparagine glycosylation sites follow: Asn-38, Asn-55, and Asn-74. Residues 106-126 form a helical membrane-spanning segment; it reads GVIFIDLIATLLLALGVYCFA. Residues 127-173 are Cytoplasmic-facing; the sequence is GHETGRPSGAAEVQALLKNEQLYQPLRDREDTQYSRLGGNWPRNKKS. One can recognise an ITAM domain in the interval 138–166; the sequence is EVQALLKNEQLYQPLRDREDTQYSRLGGN. Tyr-149 and Tyr-160 each carry phosphotyrosine.

The TCR-CD3 complex is composed of a CD3D/CD3E and a CD3G/CD3E heterodimers that preferentially associate with TCRalpha and TCRbeta, respectively, to form TCRalpha/CD3E/CD3G and TCRbeta/CD3G/CD3E trimers. In turn, the hexamer interacts with CD3Z homodimer to form the TCR-CD3 complex. Alternatively, TCRalpha and TCRbeta can be replaced by TCRgamma and TCRdelta. Interacts with coreceptors CD4 and CD8. In terms of processing, phosphorylated on Tyr residues after T-cell receptor triggering by LCK in association with CD4/CD8.

It is found in the membrane. Part of the TCR-CD3 complex present on T-lymphocyte cell surface that plays an essential role in adaptive immune response. When antigen presenting cells (APCs) activate T-cell receptor (TCR), TCR-mediated signals are transmitted across the cell membrane by the CD3 chains CD3D, CD3E, CD3G and CD3Z. All CD3 chains contain immunoreceptor tyrosine-based activation motifs (ITAMs) in their cytoplasmic domain. Upon TCR engagement, these motifs become phosphorylated by Src family protein tyrosine kinases LCK and FYN, resulting in the activation of downstream signaling pathways. In addition of this role of signal transduction in T-cell activation, CD3D plays an essential role in thymocyte differentiation. Indeed, participates in correct intracellular TCR-CD3 complex assembly and surface expression. In absence of a functional TCR-CD3 complex, thymocytes are unable to differentiate properly. Interacts with CD4 and CD8 and thus serves to establish a functional link between the TCR and coreceptors CD4 and CD8, which is needed for activation and positive selection of CD4 or CD8 T-cells. This is T-cell surface glycoprotein CD3 delta chain (Cd3d) from Mus musculus (Mouse).